Here is a 186-residue protein sequence, read N- to C-terminus: Ribosome-recycling factor (186 aa).

This sequence belongs to the RRF family.

It is found in the cytoplasm. In terms of biological role, responsible for the release of ribosomes from messenger RNA at the termination of protein biosynthesis. May increase the efficiency of translation by recycling ribosomes from one round of translation to another. This chain is Ribosome-recycling factor, found in Rubrobacter xylanophilus (strain DSM 9941 / JCM 11954 / NBRC 16129 / PRD-1).